The primary structure comprises 360 residues: Peptide chain release factor 1 (360 aa).

Position 237 is an N5-methylglutamine (Gln237).

The protein belongs to the prokaryotic/mitochondrial release factor family. Post-translationally, methylated by PrmC. Methylation increases the termination efficiency of RF1.

The protein resides in the cytoplasm. Its function is as follows. Peptide chain release factor 1 directs the termination of translation in response to the peptide chain termination codons UAG and UAA. The protein is Peptide chain release factor 1 of Ectopseudomonas mendocina (strain ymp) (Pseudomonas mendocina).